The primary structure comprises 302 residues: Snake venom metalloprotease inhibitor 02A10 (302 aa).

Positions 1–23 are cleaved as a signal peptide; sequence MSVSRLAASGLLLVSLLALALDG. A propeptide spanning residues 24–47 is cleaved from the precursor; the sequence is KPVEKWSPWLWPPRPRPPIPPLQQ. Positions 32–302 are disordered; it reads WLWPPRPRPP…CPKLPPSGGH (271 aa). Over residues 33–44 the composition is skewed to pro residues; the sequence is LWPPRPRPPIPP. Position 48 is a pyrrolidone carboxylic acid (Gln-48). A propeptide spanning residues 51–58 is cleaved from the precursor; that stretch reads LDPPIPQQ. Position 59 is a pyrrolidone carboxylic acid (Gln-59). Residues 62–69 constitute a propeptide that is removed on maturation; it reads LDPPIPQQ. Gln-70 is subject to Pyrrolidone carboxylic acid. The propeptide occupies 73–80; sequence LDPPIPQQ. Gln-81 is subject to Pyrrolidone carboxylic acid. The propeptide occupies 84–91; it reads LNPPIPQQ. Pyrrolidone carboxylic acid is present on Gln-92. Positions 95 to 102 are excised as a propeptide; that stretch reads LDPPIPQQ. At Gln-103 the chain carries Pyrrolidone carboxylic acid. Residues 106–113 constitute a propeptide that is removed on maturation; that stretch reads LNPPIPQQ. A Pyrrolidone carboxylic acid modification is found at Gln-114. Residues 117-124 constitute a propeptide that is removed on maturation; the sequence is LNPPIPQQ. Gln-125 carries the pyrrolidone carboxylic acid modification. A propeptide spanning residues 128–135 is cleaved from the precursor; that stretch reads LNPPIPQQ. Residue Gln-136 is modified to Pyrrolidone carboxylic acid. The propeptide occupies 139–146; it reads LNPPIPQQ. Gln-147 is subject to Pyrrolidone carboxylic acid. Positions 150-157 are excised as a propeptide; it reads LDPPIPQQ. Pyrrolidone carboxylic acid is present on Gln-158. Residues 161-168 constitute a propeptide that is removed on maturation; it reads LDPPIPQQ. Pyrrolidone carboxylic acid is present on Gln-169. Positions 172–179 are excised as a propeptide; the sequence is LDPPIPQQ. Gln-180 carries the post-translational modification Pyrrolidone carboxylic acid. A propeptide spanning residues 183 to 190 is cleaved from the precursor; it reads LNPPIPQQ. At Gln-191 the chain carries Pyrrolidone carboxylic acid. A propeptide spanning residues 194-201 is cleaved from the precursor; that stretch reads LDPPIPQQ. At Gln-202 the chain carries Pyrrolidone carboxylic acid. Residues 205-212 constitute a propeptide that is removed on maturation; the sequence is LDPPIPQQ. Gln-213 carries the pyrrolidone carboxylic acid modification. A propeptide spanning residues 216–223 is cleaved from the precursor; it reads LNPPIPQQ. Pyrrolidone carboxylic acid is present on Gln-224. Positions 227-273 are excised as a propeptide; it reads QRPLQPEVPSLMELHQERQKQGRMMHHDEDPGDAAEGPRRQKKEPGK. Composition is skewed to basic and acidic residues over residues 240–255 and 262–273; these read LHQE…HHDE and EGPRRQKKEPGK. A disulfide bond links Cys-279 and Cys-293. A propeptide spanning residues 294–302 is cleaved from the precursor; sequence PKLPPSGGH.

The protein in the C-terminal section; belongs to the natriuretic peptide family. Expressed by the venom gland.

It is found in the secreted. In terms of biological role, pEKW peptides may serve as metalloproteinase inhibitors during glandular storage. Their inhibition may be instantly disengaged, by dilution or physiochemical change, when venom is injected into tissue of the victim. Exhibits hypotensive and vasodepressor activity. Acts by activating natriuretic receptors (NPR1 and/or NPR2 and/or NPR3). The protein is Snake venom metalloprotease inhibitor 02A10 (Svmpi-Cce12) of Cerastes cerastes (Horned desert viper).